Consider the following 201-residue polypeptide: ATP-dependent Clp protease proteolytic subunit (201 aa).

Serine 97 serves as the catalytic Nucleophile. Histidine 122 is a catalytic residue.

It belongs to the peptidase S14 family. Fourteen ClpP subunits assemble into 2 heptameric rings which stack back to back to give a disk-like structure with a central cavity, resembling the structure of eukaryotic proteasomes.

The protein resides in the cytoplasm. It carries out the reaction Hydrolysis of proteins to small peptides in the presence of ATP and magnesium. alpha-casein is the usual test substrate. In the absence of ATP, only oligopeptides shorter than five residues are hydrolyzed (such as succinyl-Leu-Tyr-|-NHMec, and Leu-Tyr-Leu-|-Tyr-Trp, in which cleavage of the -Tyr-|-Leu- and -Tyr-|-Trp bonds also occurs).. Functionally, cleaves peptides in various proteins in a process that requires ATP hydrolysis. Has a chymotrypsin-like activity. Plays a major role in the degradation of misfolded proteins. The chain is ATP-dependent Clp protease proteolytic subunit from Nitratidesulfovibrio vulgaris (strain ATCC 29579 / DSM 644 / CCUG 34227 / NCIMB 8303 / VKM B-1760 / Hildenborough) (Desulfovibrio vulgaris).